The sequence spans 408 residues: Peptidase T (408 aa).

Residue H78 participates in Zn(2+) binding. Residue D80 is part of the active site. D140 lines the Zn(2+) pocket. Catalysis depends on E173, which acts as the Proton acceptor. Zn(2+) contacts are provided by E174, D196, and H379.

This sequence belongs to the peptidase M20B family. It depends on Zn(2+) as a cofactor.

Its subcellular location is the cytoplasm. It catalyses the reaction Release of the N-terminal residue from a tripeptide.. In terms of biological role, cleaves the N-terminal amino acid of tripeptides. In Escherichia fergusonii (strain ATCC 35469 / DSM 13698 / CCUG 18766 / IAM 14443 / JCM 21226 / LMG 7866 / NBRC 102419 / NCTC 12128 / CDC 0568-73), this protein is Peptidase T.